The primary structure comprises 879 residues: Phosphoenolpyruvate carboxylase (879 aa).

Residues His-138 and Lys-545 contribute to the active site.

This sequence belongs to the PEPCase type 1 family. Mg(2+) is required as a cofactor.

It carries out the reaction oxaloacetate + phosphate = phosphoenolpyruvate + hydrogencarbonate. In terms of biological role, forms oxaloacetate, a four-carbon dicarboxylic acid source for the tricarboxylic acid cycle. In Haemophilus influenzae (strain ATCC 51907 / DSM 11121 / KW20 / Rd), this protein is Phosphoenolpyruvate carboxylase (ppc).